The following is a 350-amino-acid chain: Uroporphyrinogen decarboxylase (350 aa).

Residues 23 to 27 (RQAGR), aspartate 72, tyrosine 149, serine 204, and histidine 318 each bind substrate.

Belongs to the uroporphyrinogen decarboxylase family. Homodimer.

The protein localises to the cytoplasm. It carries out the reaction uroporphyrinogen III + 4 H(+) = coproporphyrinogen III + 4 CO2. Its pathway is porphyrin-containing compound metabolism; protoporphyrin-IX biosynthesis; coproporphyrinogen-III from 5-aminolevulinate: step 4/4. Functionally, catalyzes the decarboxylation of four acetate groups of uroporphyrinogen-III to yield coproporphyrinogen-III. The protein is Uroporphyrinogen decarboxylase of Carboxydothermus hydrogenoformans (strain ATCC BAA-161 / DSM 6008 / Z-2901).